The primary structure comprises 307 residues: Major immediate early protein (307 aa).

The RING-type zinc finger occupies 39-92; the sequence is CAVCLETYCVQSNNIIDFLMPSECTHLFCYKCVLNMYKNAMNVPRAAVSCPMCN.

In Orgyia pseudotsugata multicapsid polyhedrosis virus (OpMNPV), this protein is Major immediate early protein (PE38).